A 33-amino-acid polypeptide reads, in one-letter code: Photosystem II reaction center protein Psb30 (33 aa).

Residues 5 to 25 (LITQLASLILIVASGPIVIGL) traverse the membrane as a helical segment.

It belongs to the Psb30/Ycf12 family. PSII is composed of 1 copy each of membrane proteins PsbA, PsbB, PsbC, PsbD, PsbE, PsbF, PsbH, PsbI, PsbJ, PsbK, PsbL, PsbM, PsbT, PsbX, PsbY, PsbZ, Psb30/Ycf12, peripheral proteins of the oxygen-evolving complex and a large number of cofactors. It forms dimeric complexes.

The protein resides in the plastid. It is found in the chloroplast thylakoid membrane. Its function is as follows. A core subunit of photosystem II (PSII), probably helps stabilize the reaction center. This is Photosystem II reaction center protein Psb30 from Lepocinclis buetschlii.